The sequence spans 270 residues: UPF0354 protein BCE_4835 (270 aa).

This sequence belongs to the UPF0354 family.

This is UPF0354 protein BCE_4835 from Bacillus cereus (strain ATCC 10987 / NRS 248).